The following is a 389-amino-acid chain: Large ribosomal subunit protein uL3 (389 aa).

Residues 1–36 (MSHRKFEHPRHGSLGFLPRKRSSRHRGKVKSFPKDD) form a disordered region. Basic residues predominate over residues 18 to 31 (PRKRSSRHRGKVKS).

This sequence belongs to the universal ribosomal protein uL3 family.

It localises to the cytoplasm. Its function is as follows. The L3 protein is a component of the large subunit of cytoplasmic ribosomes. The sequence is that of Large ribosomal subunit protein uL3 (RPL3) from Oryza sativa subsp. japonica (Rice).